Reading from the N-terminus, the 343-residue chain is Phosphatidylglycerol--prolipoprotein diacylglyceryl transferase (343 aa).

A run of 4 helical transmembrane segments spans residues 22–42 (IPIR…LIIG), 54–74 (GVIY…GRLY), 97–117 (VWEG…GAWI), and 123–143 (GIPL…AQAI). Arginine 145 serves as a coordination point for a 1,2-diacyl-sn-glycero-3-phospho-(1'-sn-glycerol). A run of 2 helical transmembrane segments spans residues 193 to 213 (VVHP…VLLI) and 257 to 277 (VNSF…LLAP). A disordered region spans residues 283–343 (PATLGGTPSS…SADNSGIVEK (61 aa)). Residues 295 to 325 (GGDDTAETEATADTEDTEDTEDGVTDAPEAD) are compositionally biased toward acidic residues.

It belongs to the Lgt family.

The protein localises to the cell membrane. The enzyme catalyses L-cysteinyl-[prolipoprotein] + a 1,2-diacyl-sn-glycero-3-phospho-(1'-sn-glycerol) = an S-1,2-diacyl-sn-glyceryl-L-cysteinyl-[prolipoprotein] + sn-glycerol 1-phosphate + H(+). It participates in protein modification; lipoprotein biosynthesis (diacylglyceryl transfer). Functionally, catalyzes the transfer of the diacylglyceryl group from phosphatidylglycerol to the sulfhydryl group of the N-terminal cysteine of a prolipoprotein, the first step in the formation of mature lipoproteins. The polypeptide is Phosphatidylglycerol--prolipoprotein diacylglyceryl transferase (Mycobacteroides abscessus (strain ATCC 19977 / DSM 44196 / CCUG 20993 / CIP 104536 / JCM 13569 / NCTC 13031 / TMC 1543 / L948) (Mycobacterium abscessus)).